Reading from the N-terminus, the 419-residue chain is 26S proteasome regulatory subunit 8 homolog A (419 aa).

Ala2 carries the post-translational modification N-acetylalanine. ATP is bound at residue 202–209 (GPPGTGKT). Lys406 is covalently cross-linked (Glycyl lysine isopeptide (Lys-Gly) (interchain with G-Cter in ubiquitin)).

It belongs to the AAA ATPase family. Component of the 19S regulatory particle (RP/PA700) base subcomplex of the 26S proteasome. The 26S proteasome is composed of a core protease (CP), known as the 20S proteasome, capped at one or both ends by the 19S regulatory particle (RP/PA700). The RP/PA700 complex is composed of at least 17 different subunits in two subcomplexes, the base and the lid, which form the portions proximal and distal to the 20S proteolytic core, respectively.

It localises to the cytoplasm. The protein resides in the nucleus. The 26S proteasome is involved in the ATP-dependent degradation of ubiquitinated proteins. The regulatory (or ATPase) complex confers ATP dependency and substrate specificity to the 26S complex. In Arabidopsis thaliana (Mouse-ear cress), this protein is 26S proteasome regulatory subunit 8 homolog A (RPT6A).